We begin with the raw amino-acid sequence, 495 residues long: SH2 domain-containing adapter protein E (495 aa).

Disordered stretches follow at residues 51 to 190, 203 to 233, and 256 to 327; these read TVSE…DKGK, DYADPYDAKRTKGQRDAERVGENDGYMEPYD, and LLDS…EYEQ. Position 107 is a phosphoserine (Ser-107). The segment covering 135–144 has biased composition (polar residues); that stretch reads TKSSGCSTYI. Residues 148–157 are compositionally biased toward basic and acidic residues; that stretch reads IKVDTQEKNG. Residues 162–181 are compositionally biased toward low complexity; it reads PSSSSSSSSSSSSASSSPSS. Composition is skewed to basic and acidic residues over residues 208–224 and 301–327; these read YDAKRTKGQRDAERVGE and PRAEGKARPPDSRLPENDERPAAEYEQ. The 96-residue stretch at 395–490 folds into the SH2 domain; the sequence is WYHGAISRAE…AEHMTLLYPV (96 aa).

The sequence is that of SH2 domain-containing adapter protein E (SHE) from Homo sapiens (Human).